A 166-amino-acid chain; its full sequence is Large ribosomal subunit protein uL10 (166 aa).

Belongs to the universal ribosomal protein uL10 family. In terms of assembly, part of the ribosomal stalk of the 50S ribosomal subunit. The N-terminus interacts with L11 and the large rRNA to form the base of the stalk. The C-terminus forms an elongated spine to which L12 dimers bind in a sequential fashion forming a multimeric L10(L12)X complex.

In terms of biological role, forms part of the ribosomal stalk, playing a central role in the interaction of the ribosome with GTP-bound translation factors. The sequence is that of Large ribosomal subunit protein uL10 from Oceanobacillus iheyensis (strain DSM 14371 / CIP 107618 / JCM 11309 / KCTC 3954 / HTE831).